A 156-amino-acid chain; its full sequence is 6,7-dimethyl-8-ribityllumazine synthase (156 aa).

5-amino-6-(D-ribitylamino)uracil is bound by residues phenylalanine 23, 57–59, and 81–83; these read AYE and AII. 86–87 provides a ligand contact to (2S)-2-hydroxy-3-oxobutyl phosphate; that stretch reads GT. Residue histidine 89 is the Proton donor of the active site. Phenylalanine 114 serves as a coordination point for 5-amino-6-(D-ribitylamino)uracil. Arginine 128 serves as a coordination point for (2S)-2-hydroxy-3-oxobutyl phosphate.

It belongs to the DMRL synthase family.

It catalyses the reaction (2S)-2-hydroxy-3-oxobutyl phosphate + 5-amino-6-(D-ribitylamino)uracil = 6,7-dimethyl-8-(1-D-ribityl)lumazine + phosphate + 2 H2O + H(+). It participates in cofactor biosynthesis; riboflavin biosynthesis; riboflavin from 2-hydroxy-3-oxobutyl phosphate and 5-amino-6-(D-ribitylamino)uracil: step 1/2. Catalyzes the formation of 6,7-dimethyl-8-ribityllumazine by condensation of 5-amino-6-(D-ribitylamino)uracil with 3,4-dihydroxy-2-butanone 4-phosphate. This is the penultimate step in the biosynthesis of riboflavin. This is 6,7-dimethyl-8-ribityllumazine synthase from Helicobacter pylori (strain P12).